We begin with the raw amino-acid sequence, 716 residues long: Tensin-4 (716 aa).

Positions 1–17 (MSQVMSSPLLAGGPAVG) are cleaved as a signal peptide. Disordered regions lie at residues 119–274 (LPPG…VSML), 301–322 (QSSS…NLGP), 334–366 (VPSN…PSIT), and 379–436 (GFPE…RDMQ). Positions 138 to 150 (KKKEEPEALDIKY) are enriched in basic and acidic residues. Polar residues predominate over residues 197 to 206 (SSESLIFSGS). Over residues 214-228 (PAPPSAVPSSHPPTS) the composition is skewed to pro residues. Ser248 carries the post-translational modification Phosphoserine. Positions 265–274 (PQLSSRVSML) are enriched in polar residues. Residues 402-419 (ATSSSMPCPATRSHSQTL) show a composition bias toward polar residues. Positions 449–556 (WFKPSISREQ…ALPCKLVIPQ (108 aa)) constitute an SH2 domain. The 122-residue stretch at 583 to 704 (CHALYLSSVS…TLQPASQVIR (122 aa)) folds into the PTB domain.

The protein belongs to the PTEN phosphatase protein family. As to quaternary structure, interacts (via SH2 domain) with Rho GTPase-activating protein DLC1 (via C-terminus); the interaction is independent of DLC1 tyrosine phosphorylation. Interacts with integrin ITGB1; the interaction displaces tensin TNS3 from the ITGB1 cytoplasmic tail and promotes ITGB1 stability. Interacts (via SH2 domain) with E3 ubiquitin-protein ligase CBL (phosphorylated on 'Tyr-782'); the interaction is enhanced in the presence of EGF and reduces interaction of CBL with EGFR. Interacts (via SH2 domain) with receptor tyrosine kinase MET (when phosphorylated); the interaction increases MET protein stability.

It is found in the cell junction. The protein localises to the focal adhesion. The protein resides in the cytoplasm. Its subcellular location is the cytoskeleton. In terms of biological role, promotes EGF-induced cell migration by displacing tensin TNS3 from the cytoplasmic tail of integrin ITGB1 which results in dissociation of TNS3 from focal adhesions, disassembly of actin stress fibers and initiation of cell migration. Suppresses ligand-induced degradation of EGFR by reducing EGFR ubiquitination in the presence of EGF. Increases MET protein stability by inhibiting MET endocytosis and subsequent lysosomal degradation which leads to increased cell survival, proliferation and migration. The sequence is that of Tensin-4 (TNS4) from Bos taurus (Bovine).